The sequence spans 384 residues: 23S rRNA (uracil(747)-C(5))-methyltransferase RlmC (384 aa).

[4Fe-4S] cluster is bound by residues C7, C15, C18, and C94. Q219, F248, E269, and N316 together coordinate S-adenosyl-L-methionine. C343 serves as the catalytic Nucleophile.

This sequence belongs to the class I-like SAM-binding methyltransferase superfamily. RNA M5U methyltransferase family. RlmC subfamily.

The catalysed reaction is uridine(747) in 23S rRNA + S-adenosyl-L-methionine = 5-methyluridine(747) in 23S rRNA + S-adenosyl-L-homocysteine + H(+). Its function is as follows. Catalyzes the formation of 5-methyl-uridine at position 747 (m5U747) in 23S rRNA. The protein is 23S rRNA (uracil(747)-C(5))-methyltransferase RlmC of Shewanella sp. (strain MR-7).